The sequence spans 176 residues: Large ribosomal subunit protein uL6 (176 aa).

The span at 156 to 170 shows a compositional bias: basic and acidic residues; the sequence is YKGKGVRYADEQVRR. Positions 156–176 are disordered; it reads YKGKGVRYADEQVRRKEAKKK.

It belongs to the universal ribosomal protein uL6 family. In terms of assembly, part of the 50S ribosomal subunit.

Functionally, this protein binds to the 23S rRNA, and is important in its secondary structure. It is located near the subunit interface in the base of the L7/L12 stalk, and near the tRNA binding site of the peptidyltransferase center. The polypeptide is Large ribosomal subunit protein uL6 (Shewanella woodyi (strain ATCC 51908 / MS32)).